A 304-amino-acid polypeptide reads, in one-letter code: UDP-N-acetylenolpyruvoylglucosamine reductase (304 aa).

One can recognise an FAD-binding PCMH-type domain in the interval 33 to 198; it reads IGGPADLLVM…LEVVLALQEG (166 aa). Arginine 177 is an active-site residue. Serine 227 functions as the Proton donor in the catalytic mechanism. The active site involves glutamate 297.

This sequence belongs to the MurB family. The cofactor is FAD.

It is found in the cytoplasm. It carries out the reaction UDP-N-acetyl-alpha-D-muramate + NADP(+) = UDP-N-acetyl-3-O-(1-carboxyvinyl)-alpha-D-glucosamine + NADPH + H(+). It functions in the pathway cell wall biogenesis; peptidoglycan biosynthesis. In terms of biological role, cell wall formation. This chain is UDP-N-acetylenolpyruvoylglucosamine reductase, found in Alkaliphilus metalliredigens (strain QYMF).